The primary structure comprises 99 residues: Ubiquitin-related modifier 1 (99 aa).

The residue at position 99 (glycine 99) is a 1-thioglycine. A Glycyl lysine isopeptide (Gly-Lys) (interchain with K-? in acceptor proteins) cross-link involves residue glycine 99.

This sequence belongs to the URM1 family. Post-translationally, C-terminal thiocarboxylation occurs in 2 steps, it is first acyl-adenylated (-COAMP) via the hesA/moeB/thiF part of UBA4, then thiocarboxylated (-COSH) via the rhodanese domain of UBA4.

The protein localises to the cytoplasm. It functions in the pathway tRNA modification; 5-methoxycarbonylmethyl-2-thiouridine-tRNA biosynthesis. Functionally, acts as a sulfur carrier required for 2-thiolation of mcm(5)S(2)U at tRNA wobble positions of cytosolic tRNA(Lys), tRNA(Glu) and tRNA(Gln). Serves as sulfur donor in tRNA 2-thiolation reaction by being thiocarboxylated (-COSH) at its C-terminus by the MOCS3 homolog UBA4. The sulfur is then transferred to tRNA to form 2-thiolation of mcm(5)S(2)U. Prior mcm(5) tRNA modification by the elongator complex is required for 2-thiolation. Also acts as a ubiquitin-like protein (UBL) that is covalently conjugated via an isopeptide bond to lysine residues of target proteins such as AHP1. The thiocarboxylated form serves as substrate for conjugation and oxidative stress specifically induces the formation of UBL-protein conjugates. The sequence is that of Ubiquitin-related modifier 1 from Yarrowia lipolytica (strain CLIB 122 / E 150) (Yeast).